We begin with the raw amino-acid sequence, 346 residues long: F(420)H(2) dehydrogenase subunit H (346 aa).

The next 8 membrane-spanning stretches (helical) occupy residues 18 to 38 (GIVGLVLIGVIFMGAMGAVWL), 91 to 111 (IFMLGSVFLMLVALPVGAVFI), 125 to 145 (ISVLYIEAVSALSIFGIFMVA), 170 to 190 (PLGITVISVAAMTGSLNIVDI), 196 to 216 (LHWNIFLQPLGCFVFFVSLMA), 257 to 277 (ILGSFLVALLFLGGWNVPGFI), 284 to 304 (GIIVPTGFLIVKVVFVLMVII), and 326 to 346 (LLPLALLNLVWAVGLGLYLGA).

This sequence belongs to the complex I subunit 1 family. In terms of assembly, the FPO complex is composed of at least 13 different subunits. FpoA, FpoH, FpoJ, FpoK, FpoL, FpoM and FpoN proteins constitute the membrane sector of the complex.

The protein localises to the cell membrane. It catalyses the reaction methanophenazine + reduced coenzyme F420-(gamma-L-Glu)(n) = dihydromethanophenazine + oxidized coenzyme F420-(gamma-L-Glu)(n) + H(+). In terms of biological role, component of the F(420)H(2) dehydrogenase (FPO complex) which is part of the energy-conserving F(420)H(2):heterodisulfide oxidoreductase system. The membrane-bound electron transfer system of the complex plays an important role in the metabolism of methylotrophic methanogens when the organisms grow on methanol or methylamines. Catalyzes the oxidation of methanophenazine to dihydromethanophenazine. It shuttles electrons from F(420)H(2), via FAD and iron-sulfur (Fe-S) centers, to methanophenazine (an electron carrier in the membrane). It couples the redox reaction to proton translocation (for every two electrons transferred, two hydrogen ions are translocated across the cytoplasmic membrane), and thus conserves the redox energy in a proton gradient. In Methanosarcina barkeri (strain Fusaro / DSM 804), this protein is F(420)H(2) dehydrogenase subunit H.